A 360-amino-acid chain; its full sequence is 3-dehydroquinate synthase (360 aa).

NAD(+)-binding positions include 71–76 (DGEQFK), 105–109 (GVIGD), 129–130 (TT), Lys142, Lys151, and 169–172 (FLKT). Zn(2+)-binding residues include Glu184, His247, and His264.

It belongs to the sugar phosphate cyclases superfamily. Dehydroquinate synthase family. It depends on NAD(+) as a cofactor. Co(2+) serves as cofactor. Requires Zn(2+) as cofactor.

It localises to the cytoplasm. The enzyme catalyses 7-phospho-2-dehydro-3-deoxy-D-arabino-heptonate = 3-dehydroquinate + phosphate. Its pathway is metabolic intermediate biosynthesis; chorismate biosynthesis; chorismate from D-erythrose 4-phosphate and phosphoenolpyruvate: step 2/7. Its function is as follows. Catalyzes the conversion of 3-deoxy-D-arabino-heptulosonate 7-phosphate (DAHP) to dehydroquinate (DHQ). In Buchnera aphidicola subsp. Schizaphis graminum (strain Sg), this protein is 3-dehydroquinate synthase.